We begin with the raw amino-acid sequence, 1331 residues long: X-linked retinitis pigmentosa GTPase regulator-interacting protein 1 (1331 aa).

Disordered stretches follow at residues 1 to 165 (MQHL…PPAF), 183 to 220 (SQLT…SEEC), and 351 to 374 (HQPL…LPPQ). Basic and acidic residues predominate over residues 41–67 (NQKELNCRRLHLHEEPTLVKEPSPKQR). Composition is skewed to polar residues over residues 77–86 (VQRSTTTQPD) and 183–193 (SQLTHTMTTDS). Positions 194-220 (THVEEIPRSPEKTSKVEKPEQRSSEEC) are enriched in basic and acidic residues. Coiled-coil stretches lie at residues 236–352 (ELIR…SSHQ) and 498–546 (MCYQ…LRSH). A compositionally biased stretch (polar residues) spans 351–367 (HQPLDSSHQPHWSTELT). The region spanning 745-870 (GARKVQSNES…AQNKSIKGDF (126 aa)) is the C2 domain. Disordered regions lie at residues 899-1057 (FQMS…VQDK) and 1088-1146 (AEDG…SDDI). Positions 908–999 (EGEEKEEEGG…DVLEASFTEE (92 aa)) form a coiled coil. The span at 910–988 (EEKEEEGGEE…EEEEEEEDEN (79 aa)) shows a compositional bias: acidic residues. Basic and acidic residues-rich tracts occupy residues 1022–1039 (PEKR…REHQ) and 1088–1115 (AEDG…EHPS). The segment covering 1129–1141 (CEQASEVSETQTT) has biased composition (polar residues). The interaction with RPGR stretch occupies residues 1136-1326 (SETQTTDSDD…ALHGIYKEMT (191 aa)).

Belongs to the RPGRIP1 family. As to quaternary structure, interacts with NPHP4. Interacts with NEK4. Forms homodimers and elongated homopolymers. Interacts with RPGR. Interacts with SPATA7. Interacts with CEP290/NPHP6; mediating the association between RPGR and CEP290/NPHP6. Expressed in the retina (at protein level).

The protein localises to the cell projection. It is found in the cilium. Its function is as follows. May function as scaffolding protein. Required for normal location of RPGR at the connecting cilium of photoreceptor cells. Required for normal disk morphogenesis and disk organization in the outer segment of photoreceptor cells and for survival of photoreceptor cells. The protein is X-linked retinitis pigmentosa GTPase regulator-interacting protein 1 (Rpgrip1) of Mus musculus (Mouse).